Here is a 164-residue protein sequence, read N- to C-terminus: Methanogen homoaconitase small subunit 2 (164 aa).

The YLRT signature appears at 26-29 (YLRT).

It belongs to the LeuD family. LeuD type 2 subfamily. In terms of assembly, heterotetramer of 2 HacA and 2 HacB proteins. Cannot form a complex with LeuC.

It catalyses the reaction (2R)-homocitrate = (2R,3S)-homoisocitrate. The enzyme catalyses (2R)-homocitrate = cis-homoaconitate + H2O. The catalysed reaction is (2R,3S)-homoisocitrate = cis-homoaconitate + H2O. It carries out the reaction cis-(homo)2aconitate + H2O = (2R,3S)-iso(homo)2citrate. It catalyses the reaction cis-(homo)3aconitate + H2O = (2R,3S)-iso(homo)3citrate. It participates in organic acid metabolism; 2-oxosuberate biosynthesis. Functionally, component of a hydro-lyase with broad substrate specificity for cis-unsaturated tricarboxylic acids. Catalyzes both the reversible dehydration of (R)-homocitrate ((R)-2-hydroxybutane-1,2,4-tricarboxylate) to produce cis-homoaconitate ((Z)-but-1-ene-1,2,4-tricarboxylate), and its hydration to homoisocitrate ((1R,2S)-1-hydroxybutane-1,2,4-tricarboxylate). Is also able to hydrate the analogous longer chain substrates cis-homo(2)-aconitate, cis-homo(3)-aconitate. These reactions are part of the biosynthesis pathway of coenzyme B. In Methanosarcina acetivorans (strain ATCC 35395 / DSM 2834 / JCM 12185 / C2A), this protein is Methanogen homoaconitase small subunit 2 (hacB2).